The chain runs to 432 residues: Small ribosomal subunit protein uS5m (432 aa).

Residues 110–130 (AGARKGRGKRTKKKKRKDLNR) form a disordered region. Residues 113 to 127 (RKGRGKRTKKKKRKD) are compositionally biased toward basic residues. The region spanning 220-284 (FDTRILEVRN…NRAIHYLHYI (65 aa)) is the S5 DRBM domain.

It belongs to the universal ribosomal protein uS5 family. Component of the mitochondrial ribosome small subunit (28S) which comprises a 12S rRNA and about 30 distinct proteins.

It is found in the mitochondrion. The chain is Small ribosomal subunit protein uS5m (Mrps5) from Mus musculus (Mouse).